The primary structure comprises 1131 residues: Activity-dependent neuroprotector homeobox protein 2 (1131 aa).

Residues 73-96 (YCCGLCKYSTKVLTSFKNHLHRYH) form a C2H2-type 1 zinc finger. A C2H2-type 2; degenerate zinc finger spans residues 106 to 128 (IPCPNCVFASQPKVVGRHFRMFH). Residues lysine 118 and lysine 146 each participate in a glycyl lysine isopeptide (Lys-Gly) (interchain with G-Cter in SUMO2) cross-link. The C2H2-type 3; degenerate zinc-finger motif lies at 155-178 (FTCLKCNFSNTLYYSMKKHVLVAH). Residues 215–240 (YYCKKCNANASSQDALMYHILTSDIH) form a C2H2-type 4 zinc finger. A compositionally biased stretch (low complexity) spans 274–285 (LAAPANGSAPSA). The tract at residues 274 to 329 (LAAPANGSAPSAPAQPPCFHLALPQNSPSPAAGQPVTVAQGAPGSLTHSPPAAGQS) is disordered. The C2H2-type 5; degenerate zinc-finger motif lies at 694–716 (KTCPVCNELFPSNVYQVHMEVAH). The segment at 747 to 768 (VRCLSCKCLVSEEELIHHLLMH) adopts a C2H2-type 6; degenerate zinc-finger fold. C2H2-type zinc fingers lie at residues 770 to 793 (LGCL…RNRH) and 875 to 898 (STCP…KERH). The C2H2-type 9; degenerate zinc-finger motif lies at 913–937 (FKCIHCCGVYTGNMTLAAIAVHLVR). Glycyl lysine isopeptide (Lys-Gly) (interchain with G-Cter in SUMO2) cross-links involve residues lysine 979 and lysine 1018. The residue at position 1024 (serine 1024) is a Phosphoserine. Lysine 1032 participates in a covalent cross-link: Glycyl lysine isopeptide (Lys-Gly) (interchain with G-Cter in SUMO1); alternate. Lysine 1032 is covalently cross-linked (Glycyl lysine isopeptide (Lys-Gly) (interchain with G-Cter in SUMO2); alternate). Residues 1043 to 1102 (PKKYEGRSYEEKKQFLKDYFHKKPYPSKKEIELLSSLFWVWKIDVASFFGKRRYICMKAI) constitute a DNA-binding region (homeobox).

It belongs to the krueppel C2H2-type zinc-finger protein family. In terms of assembly, may interact with SMARCA4/BRG1.

The protein localises to the nucleus. Functionally, may be involved in transcriptional regulation. May play a role in neuronal function; perhaps involved in protection of brain tissues from oxidative stress. May be involved in erythroid differentiation. This Homo sapiens (Human) protein is Activity-dependent neuroprotector homeobox protein 2 (ADNP2).